The following is a 137-amino-acid chain: MASERVQKILEELKALSLLEASELVKAIEEAFGVSAAAPAGGMVMAAPVAAAAAPAPAAAPEPVEEQTAFDVILEAVPADKKIAVLKVVRELTGLGLKDAKDLVEAAPKPVKEGIPKEEANEIKKKLEEAGATVKVK.

The protein belongs to the bacterial ribosomal protein bL12 family. As to quaternary structure, homodimer. Part of the ribosomal stalk of the 50S ribosomal subunit. Forms a multimeric L10(L12)X complex, where L10 forms an elongated spine to which 2 to 4 L12 dimers bind in a sequential fashion. Binds GTP-bound translation factors.

In terms of biological role, forms part of the ribosomal stalk which helps the ribosome interact with GTP-bound translation factors. Is thus essential for accurate translation. This chain is Large ribosomal subunit protein bL12, found in Synechococcus sp. (strain JA-3-3Ab) (Cyanobacteria bacterium Yellowstone A-Prime).